We begin with the raw amino-acid sequence, 510 residues long: NAD(P)H-quinone oxidoreductase subunit 2 A, chloroplastic (510 aa).

13 consecutive transmembrane segments (helical) span residues 26–46 (LFDG…ILLL), 57–77 (IPWF…ALLF), 99–119 (IFQF…VEYI), 124–144 (MAIT…MFLC), 149–169 (LITI…LSGY), 183–203 (YLLM…WLYG), 227–247 (PGIS…LSPA), 295–315 (WHPL…LIAI), 323–342 (MLAY…IIVG), 354–374 (YMLF…LFGL), 395–415 (ALSL…AGFF), 418–438 (LHLF…IGLF), and 484–504 (MIVC…IIAI).

The protein belongs to the complex I subunit 2 family. As to quaternary structure, NDH is composed of at least 16 different subunits, 5 of which are encoded in the nucleus.

Its subcellular location is the plastid. The protein localises to the chloroplast thylakoid membrane. The enzyme catalyses a plastoquinone + NADH + (n+1) H(+)(in) = a plastoquinol + NAD(+) + n H(+)(out). The catalysed reaction is a plastoquinone + NADPH + (n+1) H(+)(in) = a plastoquinol + NADP(+) + n H(+)(out). Its function is as follows. NDH shuttles electrons from NAD(P)H:plastoquinone, via FMN and iron-sulfur (Fe-S) centers, to quinones in the photosynthetic chain and possibly in a chloroplast respiratory chain. The immediate electron acceptor for the enzyme in this species is believed to be plastoquinone. Couples the redox reaction to proton translocation, and thus conserves the redox energy in a proton gradient. The chain is NAD(P)H-quinone oxidoreductase subunit 2 A, chloroplastic from Oenothera biennis (German evening primrose).